The sequence spans 128 residues: Small ribosomal subunit protein uS11 (128 aa).

It belongs to the universal ribosomal protein uS11 family. As to quaternary structure, part of the 30S ribosomal subunit. Interacts with proteins S7 and S18. Binds to IF-3.

Located on the platform of the 30S subunit, it bridges several disparate RNA helices of the 16S rRNA. Forms part of the Shine-Dalgarno cleft in the 70S ribosome. The protein is Small ribosomal subunit protein uS11 of Phytoplasma australiense.